An 876-amino-acid polypeptide reads, in one-letter code: Valine--tRNA ligase (876 aa).

The 'HIGH' region signature appears at 44-54 (PNVTGKLHLGH). Positions 520–524 (KMSKS) match the 'KMSKS' region motif. ATP is bound at residue K523. Residues 805–876 (LEGLIDMDKE…VKARIEQLKA (72 aa)) are a coiled coil.

Belongs to the class-I aminoacyl-tRNA synthetase family. ValS type 1 subfamily. In terms of assembly, monomer.

The protein resides in the cytoplasm. The catalysed reaction is tRNA(Val) + L-valine + ATP = L-valyl-tRNA(Val) + AMP + diphosphate. Its function is as follows. Catalyzes the attachment of valine to tRNA(Val). As ValRS can inadvertently accommodate and process structurally similar amino acids such as threonine, to avoid such errors, it has a 'posttransfer' editing activity that hydrolyzes mischarged Thr-tRNA(Val) in a tRNA-dependent manner. This is Valine--tRNA ligase from Staphylococcus aureus (strain JH1).